The sequence spans 347 residues: UDP-N-acetylenolpyruvoylglucosamine reductase (347 aa).

The 189-residue stretch at 33–221 (AGGSAERIYL…SGAWFALPRD (189 aa)) folds into the FAD-binding PCMH-type domain. R180 is an active-site residue. S250 (proton donor) is an active-site residue. Residue E320 is part of the active site.

It belongs to the MurB family. FAD is required as a cofactor.

The protein localises to the cytoplasm. It carries out the reaction UDP-N-acetyl-alpha-D-muramate + NADP(+) = UDP-N-acetyl-3-O-(1-carboxyvinyl)-alpha-D-glucosamine + NADPH + H(+). The protein operates within cell wall biogenesis; peptidoglycan biosynthesis. Functionally, cell wall formation. In Nitrosospira multiformis (strain ATCC 25196 / NCIMB 11849 / C 71), this protein is UDP-N-acetylenolpyruvoylglucosamine reductase.